The primary structure comprises 1167 residues: C5a peptidase (1167 aa).

The first 31 residues, 1 to 31, serve as a signal peptide directing secretion; the sequence is MRKKQKLPFDKLAIALMSTSILLNAQSDIKA. The span at 34 to 52 shows a compositional bias: polar residues; that stretch reads VTEDTPVTEQAVETPQPTA. The segment at 34–73 is disordered; it reads VTEDTPVTEQAVETPQPTAVSEEVPSSKETKTPQTPDDAE. Residues 99-581 form the Peptidase S8 domain; the sequence is KATIRDLNDP…AGAVDAKKAS (483 aa). Residues aspartate 130, histidine 193, and serine 512 each act as charge relay system in the active site. The interval 1029 to 1133 is disordered; that stretch reads EGHSNKPEQD…RDQLPTTNDK (105 aa). 4 repeat units span residues 1034-1050, 1051-1067, 1068-1084, and 1085-1101. Residues 1034-1101 are 4 X 17 AA tandem repeats; it reads KPEQDGSGQT…GQTPGKTPQK (68 aa). Composition is skewed to basic and acidic residues over residues 1044 to 1071 and 1078 to 1090; these read PDKK…KPEQ and PDKK…EKDS. Polar residues-rich tracts occupy residues 1092–1106 and 1120–1130; these read GQTP…QPSR and KASTRDQLPTT. The short motif at 1127 to 1131 is the LPXTG sorting signal element; sequence LPTTN. Residue threonine 1130 is modified to Pentaglycyl murein peptidoglycan amidated threonine. Residues 1131–1167 constitute a propeptide, removed by sortase; sequence NDKDTNRLHLLKLVMTTFFFGLVAHIFKTKRQKETKK.

This sequence belongs to the peptidase S8 family. Post-translationally, cleaved by SpeB protease; leading to its degradation. Degradation by SpeB is probably strictly regulated to preserve integrity of C5a peptidase.

The protein localises to the secreted. It is found in the cell wall. The enzyme catalyses The primary cleavage site is at 67-His-|-Lys-68 in human C5a with a minor secondary cleavage site at 58-Ala-|-Ser-59.. This virulence factor of S.pyogenes specifically cleaves the human serum chemotaxin C5a at '68-Lys-|-Asp-69' bond near its C-terminus, destroying its ability to serve as a chemoattractant. The polypeptide is C5a peptidase (scpA) (Streptococcus pyogenes).